The following is a 603-amino-acid chain: MAEETGQSKLAAAKKKFKEYWQRNRPGVPAAAKRNTKANGSSPETAASGGCHSSEASSSASSSLHARQSPCQEQAAVLNSRSIKISRLNDTIKSLKQQKKQVEHQLEEEKKANNEKQKAERELEGQIQRLNTEKKKLNTDLYHMKHSLRYFEEESKDLAGRLQRSSQRIGELEWSLCAVAATQKKKPDGFSSRSKALLKRQLEQSIREQILLKGHVTQLKESLKEVQLERDQYAEQIKGERAQWQQRMRKMSQEVCTLKEEKKHDTHRVEELERSLSRLKNQMAEPLPPDAPAVSSEVELQDLRKELERVAGELQAQVENNQCISLLNRGQKERLREQEERLQEQQERLREREKRLQQLAEPQSDLEELKHENKSALQLEQQVKELQEKLGQVMETLTSAEKEPEAAVPASGTGGESSGLMDLLEEKADLREHVEKLELGFIQYRRERCHQKVHRLLTEPGDSAKDASPGGGHHQAGPGQGGEEGEAAGAAGDGVAACGSYSEGHGKFLAAARNPAAEPSPGAPAPQELGAADKHGDLCEASLTNSVEPAQGEAREGSSQDNPTAQPVLQLLGEMQDHQEHPGLGSNCCVPCFCWAWLPRRRR.

Disordered stretches follow at residues 1 to 82 (MAEE…NSRS), 95 to 125 (LKQQ…ELEG), 398 to 419 (TSAE…ESSG), and 460 to 492 (PGDS…GAAG). Positions 46-66 (AASGGCHSSEASSSASSSLHA) are enriched in low complexity. Residues 69 to 82 (SPCQEQAAVLNSRS) show a composition bias toward polar residues. Coiled coils occupy residues 82 to 173 (SIKI…GELE) and 212 to 440 (LKGH…LELG). Positions 100–124 (KQVEHQLEEEKKANNEKQKAERELE) are enriched in basic and acidic residues. A compositionally biased stretch (gly residues) spans 469-482 (PGGGHHQAGPGQGG). The interval 491 to 603 (AGDGVAACGS…CWAWLPRRRR (113 aa)) is golgi-targeting domain.

This sequence belongs to the GOLGA8 family. Highly expressed in brain, heart and kidney. Detected at lower levels in liver, thymus, spleen, lung and peripheral blood leukocytes.

The protein localises to the golgi apparatus. Its subcellular location is the golgi stack membrane. In terms of biological role, may be involved in maintaining Golgi structure. The sequence is that of Golgin subfamily A member 8B (GOLGA8B) from Homo sapiens (Human).